We begin with the raw amino-acid sequence, 390 residues long: MEEMFKEQDFWSFNESSRNSTVGNETFGGNQTVNPLKRNEEVAKVEVTVLALVLFLALAGNLCVLIAIYTAKHTQSRMYYLMKHLSIADLVVAVFQVLPQLIWDITFRFYGPDFLCRLVKYLQTVGMFASTYMLVLMSIDRCIAICQPLRSLHKRKDRCYVIVSWALSLVFSVPQVYIFSLREIGNGVYDCWGDFVQPWGAKAYITWISLTIYIIPVAILGGCYGLISFKIWQNFKRKTKKDQCITLTTAASKANALARVSSVKLVSKAKITTVKMTFVIVLAYIVCWTPFFFVQMWSAWDPEAPREAMPFIISMLLASLNSCCNPWIYMFFAGHLFHDLKQSLLCCSTLYLKSSQCRCDQEHDSRKSNCSTYVIKSTSSQRSITQSSIT.

The Extracellular segment spans residues Met1–Thr48. Asn14, Asn19, Asn24, and Asn30 each carry an N-linked (GlcNAc...) asparagine glycan. Residues Val49 to Tyr69 form a helical membrane-spanning segment. The Cytoplasmic segment spans residues Thr70–Ser86. A helical membrane pass occupies residues Ile87–Phe107. Topologically, residues Arg108–Thr124 are extracellular. An intrachain disulfide couples Cys116 to Cys191. Residues Val125–Ile145 traverse the membrane as a helical segment. The Cytoplasmic portion of the chain corresponds to Cys146–Tyr160. A helical transmembrane segment spans residues Val161–Leu181. Residues Arg182 to Thr206 are Extracellular-facing. The chain crosses the membrane as a helical span at residues Trp207–Ile227. At Ser228–Met276 the chain is on the cytoplasmic side. A helical transmembrane segment spans residues Thr277–Trp297. Over Ser298–Phe311 the chain is Extracellular. A helical membrane pass occupies residues Ile312–Phe332. Over Ala333 to Thr390 the chain is Cytoplasmic.

Belongs to the G-protein coupled receptor 1 family. Vasopressin/oxytocin receptor subfamily. In terms of tissue distribution, expressed in brain, intestine, bladder, skeletal muscle, lateral line, gills and kidney.

It localises to the cell membrane. In terms of biological role, binds to isotocin. Can also be activated by vasotocin, mesotocin, oxytocin and Arg-vasopressin, although these have lower potencies than isotocin. Produces an induction of membrane chloride currents indicating that it is coupled to the inositol phosphate/calcium pathway. The sequence is that of Isotocin receptor from Catostomus commersonii (White sucker).